A 491-amino-acid polypeptide reads, in one-letter code: Lysine--tRNA ligase (491 aa).

Mg(2+) contacts are provided by Glu400 and Glu407.

It belongs to the class-II aminoacyl-tRNA synthetase family. As to quaternary structure, homodimer. It depends on Mg(2+) as a cofactor.

It is found in the cytoplasm. It carries out the reaction tRNA(Lys) + L-lysine + ATP = L-lysyl-tRNA(Lys) + AMP + diphosphate. The polypeptide is Lysine--tRNA ligase (Mesomycoplasma hyopneumoniae (strain 7448) (Mycoplasma hyopneumoniae)).